Reading from the N-terminus, the 212-residue chain is Methylthioribulose-1-phosphate dehydratase (212 aa).

Positions 97 and 99 each coordinate Zn(2+).

The protein belongs to the aldolase class II family. MtnB subfamily. In terms of assembly, homotetramer. The cofactor is Zn(2+).

The catalysed reaction is 5-(methylsulfanyl)-D-ribulose 1-phosphate = 5-methylsulfanyl-2,3-dioxopentyl phosphate + H2O. Its pathway is amino-acid biosynthesis; L-methionine biosynthesis via salvage pathway; L-methionine from S-methyl-5-thio-alpha-D-ribose 1-phosphate: step 2/6. Functionally, catalyzes the dehydration of methylthioribulose-1-phosphate (MTRu-1-P) into 2,3-diketo-5-methylthiopentyl-1-phosphate (DK-MTP-1-P). The sequence is that of Methylthioribulose-1-phosphate dehydratase from Bacillus cereus (strain B4264).